We begin with the raw amino-acid sequence, 32 residues long: Cytochrome b6-f complex subunit 7 (32 aa).

The chain crosses the membrane as a helical span at residues Ala9–Val29.

The protein belongs to the PetM family. The 4 large subunits of the cytochrome b6-f complex are cytochrome b6, subunit IV (17 kDa polypeptide, PetD), cytochrome f and the Rieske protein, while the 4 small subunits are PetG, PetL, PetM and PetN. The complex functions as a dimer.

It localises to the plastid. It is found in the chloroplast thylakoid membrane. Component of the cytochrome b6-f complex, which mediates electron transfer between photosystem II (PSII) and photosystem I (PSI), cyclic electron flow around PSI, and state transitions. The chain is Cytochrome b6-f complex subunit 7 from Porphyra purpurea (Red seaweed).